Reading from the N-terminus, the 891-residue chain is Alanine--tRNA ligase (891 aa).

Residues histidine 564, histidine 568, cysteine 677, and histidine 681 each contribute to the Zn(2+) site.

It belongs to the class-II aminoacyl-tRNA synthetase family. Zn(2+) is required as a cofactor.

Its subcellular location is the cytoplasm. The enzyme catalyses tRNA(Ala) + L-alanine + ATP = L-alanyl-tRNA(Ala) + AMP + diphosphate. Catalyzes the attachment of alanine to tRNA(Ala) in a two-step reaction: alanine is first activated by ATP to form Ala-AMP and then transferred to the acceptor end of tRNA(Ala). Also edits incorrectly charged Ser-tRNA(Ala) and Gly-tRNA(Ala) via its editing domain. The sequence is that of Alanine--tRNA ligase from Rhodopseudomonas palustris (strain HaA2).